We begin with the raw amino-acid sequence, 570 residues long: GTPase Obg (570 aa).

The Obg domain maps to 2-168 (SDFVDRVTVH…RDIILELKSI (167 aa)). The interval 15 to 43 (GDGGNGSAGIRREKYKPLAGPNGGNGGKG) is disordered. The OBG-type G domain maps to 169–349 (ADVALVGFPS…LNFALAKLVK (181 aa)). Residues 175 to 182 (GFPSAGKS), 200 to 204 (FTTLV), 221 to 224 (DVPG), 301 to 304 (NKID), and 330 to 332 (STA) contribute to the GTP site. Residues S182 and T202 each coordinate Mg(2+). The OCT domain maps to 382 to 468 (GRNAQVREFE…ERAVAFDWDP (87 aa)). Positions 521–570 (RAAMQAERAAGHWADPSIDDDRHDEQSLFGRGEVEEYEDEPGADGSRQLD) are disordered.

Belongs to the TRAFAC class OBG-HflX-like GTPase superfamily. OBG GTPase family. As to quaternary structure, monomer. It depends on Mg(2+) as a cofactor.

The protein localises to the cytoplasm. Functionally, an essential GTPase which binds GTP, GDP and possibly (p)ppGpp with moderate affinity, with high nucleotide exchange rates and a fairly low GTP hydrolysis rate. Plays a role in control of the cell cycle, stress response, ribosome biogenesis and in those bacteria that undergo differentiation, in morphogenesis control. This chain is GTPase Obg, found in Bifidobacterium animalis subsp. lactis (strain AD011).